An 88-amino-acid polypeptide reads, in one-letter code: Large ribosomal subunit protein eL31 (88 aa).

This sequence belongs to the eukaryotic ribosomal protein eL31 family.

The sequence is that of Large ribosomal subunit protein eL31 (rpl31e) from Sulfurisphaera tokodaii (strain DSM 16993 / JCM 10545 / NBRC 100140 / 7) (Sulfolobus tokodaii).